The sequence spans 591 residues: Paralemmin-3 (591 aa).

4 consecutive repeats follow at residues 171–174 (EKNK), 183–186 (EKNQ), 224–227 (EKNQ), and 234–237 (KNQD). Polar residues predominate over residues 282–293 (DQTQSTSDQNME). Disordered stretches follow at residues 282–317 (DQTQ…TKDQ), 332–413 (KGTT…QNQD), and 515–591 (PDLK…CVVM). Composition is skewed to basic and acidic residues over residues 306-317 (SQSEGKIQTKDQ) and 349-383 (EPKE…DMDP). 2 stretches are compositionally biased toward polar residues: residues 385-413 (QLST…QNQD) and 528-542 (QESS…TIAQ). The span at 543-554 (SSSAEGNSSPES) shows a compositional bias: low complexity. Polar residues predominate over residues 559-575 (QKSQGTDSQQGGNTATQ). Positions 579–583 (RRKKK) match the Nuclear localization signal motif. S-palmitoyl cysteine attachment occurs at residues Cys585 and Cys587. Cys588 carries the cysteine methyl ester modification. The S-farnesyl cysteine moiety is linked to residue Cys588. A propeptide spans 589-591 (VVM) (removed in mature form).

Belongs to the paralemmin family. May be phosphorylated during oocyte maturation. Post-translationally, palmitoylated on Cys-585 and Cys-587 and prenylated on Cys-588; which is required for membrane association. As to expression, in Xenopus oocyte, in the central nervous system cells of tadpoles and adult frogs, and transiently in epithelial cells of stomach and gut of tadpoles. Highly expressed in kidney.

It localises to the cytoplasm. It is found in the nucleus. Its subcellular location is the cell membrane. Maternal ATP-binding protein that may have multiple functions during development, one of which may be associated with the development and maintenance of the central nervous system. The chain is Paralemmin-3 (palm3) from Xenopus laevis (African clawed frog).